The primary structure comprises 177 residues: Protein OPG036 (177 aa).

The protein belongs to the poxviridae OPG036 family.

The protein localises to the host nucleus. Plays a role in the inhibition of host innate immune response. Within the host nucleus, inhibits activation of interferon-beta promoter by inhibiting IRF3 activation. The protein is Protein OPG036 (OPG036) of Homo sapiens (Human).